Consider the following 573-residue polypeptide: NEDD4-binding protein 3-B (573 aa).

Disordered stretches follow at residues 119 to 138 (EFSK…RFGP), 173 to 220 (CVGS…NSYS), and 384 to 405 (GENE…NLED). Over residues 125–135 (LPERGHSDKSR) the composition is skewed to basic and acidic residues. Over residues 186 to 196 (SNSHSNNPSES) the composition is skewed to low complexity. Polar residues-rich tracts occupy residues 207–220 (DSKQ…NSYS) and 392–401 (KQSQSDNSGP). A coiled-coil region spans residues 287–474 (ESVEDVARQL…CLQALEDVKS (188 aa)).

This sequence belongs to the N4BP3 family.

The protein resides in the cytoplasmic vesicle. Its subcellular location is the cell projection. The protein localises to the axon. It localises to the dendrite. In terms of biological role, plays a role in axon and dendrite arborization during cranial nerve development. Also important for neural crest migration and early development of other anterior structures including eye, brain and cranial cartilage. The protein is NEDD4-binding protein 3-B of Xenopus laevis (African clawed frog).